Here is a 261-residue protein sequence, read N- to C-terminus: Imidazole glycerol phosphate synthase subunit HisF (261 aa).

Catalysis depends on residues D16 and D135.

This sequence belongs to the HisA/HisF family. In terms of assembly, heterodimer of HisH and HisF.

It is found in the cytoplasm. It carries out the reaction 5-[(5-phospho-1-deoxy-D-ribulos-1-ylimino)methylamino]-1-(5-phospho-beta-D-ribosyl)imidazole-4-carboxamide + L-glutamine = D-erythro-1-(imidazol-4-yl)glycerol 3-phosphate + 5-amino-1-(5-phospho-beta-D-ribosyl)imidazole-4-carboxamide + L-glutamate + H(+). The protein operates within amino-acid biosynthesis; L-histidine biosynthesis; L-histidine from 5-phospho-alpha-D-ribose 1-diphosphate: step 5/9. Its function is as follows. IGPS catalyzes the conversion of PRFAR and glutamine to IGP, AICAR and glutamate. The HisF subunit catalyzes the cyclization activity that produces IGP and AICAR from PRFAR using the ammonia provided by the HisH subunit. The chain is Imidazole glycerol phosphate synthase subunit HisF from Mycobacterium leprae (strain Br4923).